The primary structure comprises 57 residues: uncharacterized protein (57 aa).

A disordered region spans residues Gln-34–Phe-57.

This is an uncharacterized protein from Saccharomyces cerevisiae (strain ATCC 204508 / S288c) (Baker's yeast).